A 239-amino-acid chain; its full sequence is Tryptophan synthase alpha chain (239 aa).

Catalysis depends on proton acceptor residues Glu-34 and Asp-45.

This sequence belongs to the TrpA family. In terms of assembly, tetramer of two alpha and two beta chains.

It carries out the reaction (1S,2R)-1-C-(indol-3-yl)glycerol 3-phosphate + L-serine = D-glyceraldehyde 3-phosphate + L-tryptophan + H2O. The protein operates within amino-acid biosynthesis; L-tryptophan biosynthesis; L-tryptophan from chorismate: step 5/5. Functionally, the alpha subunit is responsible for the aldol cleavage of indoleglycerol phosphate to indole and glyceraldehyde 3-phosphate. The protein is Tryptophan synthase alpha chain of Thermotoga petrophila (strain ATCC BAA-488 / DSM 13995 / JCM 10881 / RKU-1).